The following is a 141-amino-acid chain: Large ribosomal subunit protein uL16 (141 aa).

Residues 1 to 21 form a disordered region; the sequence is MLMPKRVKYRKQQRGHNRGMA.

It belongs to the universal ribosomal protein uL16 family. As to quaternary structure, part of the 50S ribosomal subunit.

In terms of biological role, binds 23S rRNA and is also seen to make contacts with the A and possibly P site tRNAs. This chain is Large ribosomal subunit protein uL16, found in Roseiflexus sp. (strain RS-1).